The chain runs to 641 residues: Methylenetetrahydrofolate reductase 2 (641 aa).

The active-site Proton donor/acceptor is Glu20. Residues 20–25 (EYFPPK) and 52–53 (TW) contribute to the NAD(+) site. FAD is bound by residues 52 to 53 (TW), His81, 111 to 113 (RGD), Tyr153, Asp172, and Lys179. Asp113 contacts substrate. Gln190 is a substrate binding site.

Belongs to the methylenetetrahydrofolate reductase family. Requires FAD as cofactor.

It catalyses the reaction (6S)-5-methyl-5,6,7,8-tetrahydrofolate + NADP(+) = (6R)-5,10-methylene-5,6,7,8-tetrahydrofolate + NADPH + H(+). It participates in one-carbon metabolism; tetrahydrofolate interconversion. In terms of biological role, major methylenetetrahydrofolate reductase required to generate the methyl groups necessary for methionine synthetase to convert homocysteine to methionine. Performs 15 to 20 percent of the total methylenetetrahydrofolate reductase activity of the cells. This Schizosaccharomyces pombe (strain 972 / ATCC 24843) (Fission yeast) protein is Methylenetetrahydrofolate reductase 2 (met11).